A 232-amino-acid chain; its full sequence is Probable proteasome subunit alpha type-5 (232 aa).

This sequence belongs to the peptidase T1A family. In terms of assembly, the 26S proteasome consists of a 20S proteasome core and two 19S regulatory subunits. The 20S proteasome core is composed of 28 subunits that are arranged in four stacked rings, resulting in a barrel-shaped structure. The two end rings are each formed by seven alpha subunits, and the two central rings are each formed by seven beta subunits. The catalytic chamber with the active sites is on the inside of the barrel.

The protein resides in the cytoplasm. Its subcellular location is the nucleus. In terms of biological role, the proteasome degrades poly-ubiquitinated proteins in the cytoplasm and in the nucleus. It is essential for the regulated turnover of proteins and for the removal of misfolded proteins. The proteasome is a multicatalytic proteinase complex that is characterized by its ability to cleave peptides with Arg, Phe, Tyr, Leu, and Glu adjacent to the leaving group at neutral or slightly basic pH. It has an ATP-dependent proteolytic activity. In Encephalitozoon cuniculi (strain GB-M1) (Microsporidian parasite), this protein is Probable proteasome subunit alpha type-5 (PUP2).